The sequence spans 216 residues: Cytochrome c biogenesis ATP-binding export protein CcmA (216 aa).

The region spanning 18 to 216 (LQVEGLAGRR…AHARTLEISA (199 aa)) is the ABC transporter domain. Residue 50–57 (GHNGSGKT) participates in ATP binding.

The protein belongs to the ABC transporter superfamily. CcmA exporter (TC 3.A.1.107) family. The complex is composed of two ATP-binding proteins (CcmA) and two transmembrane proteins (CcmB).

The protein resides in the cell inner membrane. The enzyme catalyses heme b(in) + ATP + H2O = heme b(out) + ADP + phosphate + H(+). Part of the ABC transporter complex CcmAB involved in the biogenesis of c-type cytochromes; once thought to export heme, this seems not to be the case, but its exact role is uncertain. Responsible for energy coupling to the transport system. This Nitrosococcus oceani (strain ATCC 19707 / BCRC 17464 / JCM 30415 / NCIMB 11848 / C-107) protein is Cytochrome c biogenesis ATP-binding export protein CcmA.